A 205-amino-acid chain; its full sequence is Pyrrolidone-carboxylate peptidase (205 aa).

Catalysis depends on residues Glu-79, Cys-142, and His-165.

The protein belongs to the peptidase C15 family. In terms of assembly, homotetramer.

The protein resides in the cytoplasm. It catalyses the reaction Release of an N-terminal pyroglutamyl group from a polypeptide, the second amino acid generally not being Pro.. Its function is as follows. Removes 5-oxoproline from various penultimate amino acid residues except L-proline. In Gloeobacter violaceus (strain ATCC 29082 / PCC 7421), this protein is Pyrrolidone-carboxylate peptidase.